A 322-amino-acid polypeptide reads, in one-letter code: 6-deoxy-6-sulfo-D-fructose transketolase subunit SqwH (322 aa).

Belongs to the transketolase family. Forms a complex with SqwG. Thiamine diphosphate is required as a cofactor.

It catalyses the reaction 6-deoxy-6-sulfo-D-fructose + D-glyceraldehyde 3-phosphate = 4-deoxy-4-sulfo-D-erythrose + D-xylulose 5-phosphate. The catalysed reaction is 4-deoxy-4-sulfo-D-erythrulose + D-glyceraldehyde 3-phosphate = sulfoacetaldehyde + D-xylulose 5-phosphate. Its function is as follows. Part of the sulfo-TK pathway, a D-sulfoquinovose degradation pathway that produces 2-hydroxyethane-1-sulfonate (isethionate). Catalyzes two steps of the pathway: the formation of 4-deoxy-4-sulfoerythrose (SE) and xylulose 5-phosphate from 6-deoxy-6-sulfo-D-fructose (SF) and glyceraldehyde 3-phosphate, and the formation of sulfoacetaldehyde (SA) and xylulose 5-phosphate from 4-deoxy-4-sulfo-D-erythrulose (SEu) and glyceraldehyde 3-phosphate. This chain is 6-deoxy-6-sulfo-D-fructose transketolase subunit SqwH, found in Clostridium sp. (strain MSTE9).